Consider the following 232-residue polypeptide: Triosephosphate isomerase (232 aa).

6 to 8 (NFK) lines the substrate pocket. H90 (electrophile) is an active-site residue. E159 (proton acceptor) is an active-site residue. Residues G165 and S195 each contribute to the substrate site.

This sequence belongs to the triosephosphate isomerase family. Homodimer.

The protein resides in the cytoplasm. The catalysed reaction is D-glyceraldehyde 3-phosphate = dihydroxyacetone phosphate. It functions in the pathway carbohydrate biosynthesis; gluconeogenesis. It participates in carbohydrate degradation; glycolysis; D-glyceraldehyde 3-phosphate from glycerone phosphate: step 1/1. In terms of biological role, involved in the gluconeogenesis. Catalyzes stereospecifically the conversion of dihydroxyacetone phosphate (DHAP) to D-glyceraldehyde-3-phosphate (G3P). The protein is Triosephosphate isomerase of Wolinella succinogenes (strain ATCC 29543 / DSM 1740 / CCUG 13145 / JCM 31913 / LMG 7466 / NCTC 11488 / FDC 602W) (Vibrio succinogenes).